We begin with the raw amino-acid sequence, 399 residues long: Subtilisin-like protease 1 (399 aa).

Residues 1–19 (MGVFRFISISLAAVSAANA) form the signal peptide. A propeptide spanning residues 20–116 (AQILSMPHAQ…VEPDTIISVH (97 aa)) is cleaved from the precursor. An Inhibitor I9 domain is found at 34 to 115 (SYIVMMKDDT…FVEPDTIISV (82 aa)). The Peptidase S8 domain maps to 126 to 399 (SWGLARISNP…TNVLINNGGA (274 aa)). Residues Asp158 and His190 each act as charge relay system in the active site. Residues 175–198 (GSNQVNDGDDRDGSGHGTHTSGTM) are disordered. Residue Asn251 is glycosylated (N-linked (GlcNAc...) asparagine). Residues 282 to 294 (NDNQDAQSSSPAS) show a composition bias toward polar residues. A disordered region spans residues 282-312 (NDNQDAQSSSPASEPSVCTVGSSAEDDSRSS). Ser345 (charge relay system) is an active-site residue.

The protein belongs to the peptidase S8 family.

It is found in the secreted. Secreted subtilisin-like serine protease with keratinolytic activity that contributes to pathogenicity. The chain is Subtilisin-like protease 1 (SUB1) from Arthroderma benhamiae (Trichophyton mentagrophytes).